Consider the following 196-residue polypeptide: ATP-dependent Clp protease proteolytic subunit (196 aa).

Catalysis depends on S101, which acts as the Nucleophile. H126 is an active-site residue.

This sequence belongs to the peptidase S14 family. As to quaternary structure, component of the chloroplastic Clp protease core complex.

Its subcellular location is the plastid. It localises to the chloroplast stroma. It catalyses the reaction Hydrolysis of proteins to small peptides in the presence of ATP and magnesium. alpha-casein is the usual test substrate. In the absence of ATP, only oligopeptides shorter than five residues are hydrolyzed (such as succinyl-Leu-Tyr-|-NHMec, and Leu-Tyr-Leu-|-Tyr-Trp, in which cleavage of the -Tyr-|-Leu- and -Tyr-|-Trp bonds also occurs).. Functionally, cleaves peptides in various proteins in a process that requires ATP hydrolysis. Has a chymotrypsin-like activity. Plays a major role in the degradation of misfolded proteins. In Panax ginseng (Korean ginseng), this protein is ATP-dependent Clp protease proteolytic subunit.